A 1226-amino-acid polypeptide reads, in one-letter code: MGHLPRGTLGGRRLLPLLGLFVLLKIVTTFHVAVQDDNNIVVSLEASDIVSPASVYVVRVAGESKNYFFEFEEFNSTLPPPVVFKATYHGLYYIITLVVVNGNVVTKPSRSITVLTKPLPVTSVSIYDYKPSPETGVLFEIHYPEKYNVFSRVNISYWEGRDFRTMLYKDFFKGKTVFNHWLPGLCYSNITFQLVSEATFNKSTLVEYSGVSHEPKQHRTAPYPPRNISVRFVNLNKNNWEEPSGSFPEDSFIKPPQDSIGRDRRFHFPEETPETPPSNVSSGSPPSNVSSAWPDPNSTDYESTSQPFWWDSASAAPENEEDFVSALPADYDTETTLDRTEKPTADPFSAFPVQMTLSWLPPKPPTAFDGFNILIEREENFTDYLTVDEEAHEFVAELKEPGKYKLSVTTFSSSGACETRKSQSAKSLSFYISPTGEWIEELTEKPQHVSVHVLSSTTALMSWTSSQENYNSTIVSVVSLTCQKQKESQRLEKQYCTQVNSSKPVIENLVPGAQYQVVMYLRKGPLIGPPSDPVTFAIVPTGIKDLMLYPLGPTAVVLSWTRPILGVFRKYVVEMFYFNPTTMTSEWTTYYEIAATVSLTASVRIASLLPAWYYNFRVTMVTWGDPELSCCDSSTISFITAPVAPEITSVEYFNSLLYISWTYGDATTDLSHSRMLHWMVVAEGRKKIKKSVTRNVMTAILSLPPGDIYNLSVTACTERGSNTSLPRLVKLEPAPPKSLFAVNKTQTSVTLLWVEEGVADFFEVFCQQLGSGHNGKLQEPVAVSSHVVTISSLLPATAYNCSVTSFSHDTPSVPTFIAVSTMVTEVNPNVVVISVLAILSTLLIGLLLVTLVILRKKHLQMARECGAGTFVNFASLEREGKLPYSWRRSVFALLTLLPSCLWTDYLLAFYINPWSKNGLKKRKLTNPVQLDDFDSYIKDMAKDSDYKFSLQFEELKLIGLDIPHFAADLPLNRCKNRYTNILPYDFSRVRLVSMNEEEGADYINANYIPGYNSPQEYIATQGPLPETRNDFWKMVLQQKSHIIVMLTQCNEKRRVKCDHYWPFTEEPIAYGDITVEMVSEEEEEDWASRHFRINYADEAQDVMHFNYTAWPDHGVPPANAAESILQFVFTVRQQAAKSKGPMIIHCSAGVGRTGTFIALDRLLQHIRDHEFVDILGLVSEMRSYRMSMVQTEEQYIFIHQCVQLMWLRKKQQFCISDVIYENVSKS.

The first 29 residues, 1–29, serve as a signal peptide directing secretion; the sequence is MGHLPRGTLGGRRLLPLLGLFVLLKIVTT. Residues 30-115 form the Fibronectin type-III 1 domain; the sequence is FHVAVQDDNN…TKPSRSITVL (86 aa). The Extracellular portion of the chain corresponds to 30 to 832; the sequence is FHVAVQDDNN…VTEVNPNVVV (803 aa). Asn-75, Asn-154, and Asn-227 each carry an N-linked (GlcNAc...) asparagine glycan. Residues 242–305 form a disordered region; it reads EPSGSFPEDS…PNSTDYESTS (64 aa). Over residues 260 to 270 the composition is skewed to basic and acidic residues; the sequence is IGRDRRFHFPE. Positions 277-291 are enriched in low complexity; sequence PSNVSSGSPPSNVSS. Asn-279 carries an N-linked (GlcNAc...) asparagine glycan. Residues 296-305 show a composition bias toward polar residues; sequence PNSTDYESTS. Fibronectin type-III domains follow at residues 339–435, 445–541, 542–638, 641–734, and 735–827; these read RTEK…ISPT, KPQH…IVPT, GIKD…TISF, APVA…LEPA, and PPKS…TEVN. Residues Asn-471 and Asn-500 are each glycosylated (N-linked (GlcNAc...) asparagine). Asn-710, Asn-743, and Asn-800 each carry an N-linked (GlcNAc...) asparagine glycan. The helical transmembrane segment at 833–853 threads the bilayer; the sequence is ISVLAILSTLLIGLLLVTLVI. The Cytoplasmic segment spans residues 854–1226; sequence LRKKHLQMAR…DVIYENVSKS (373 aa). Ser-875 carries the phosphoserine modification. The 258-residue stretch at 948 to 1205 folds into the Tyrosine-protein phosphatase domain; it reads FSLQFEELKL…IFIHQCVQLM (258 aa). Substrate contacts are provided by residues Asp-1112, 1146–1152, and Gln-1190; that span reads CSAGVGR. Cys-1146 (phosphocysteine intermediate) is an active-site residue. A Phosphotyrosine modification is found at Tyr-1220.

The protein belongs to the protein-tyrosine phosphatase family. Receptor class 3 subfamily. As to quaternary structure, interacts (phosphorylated form) with FYN and GRB2.

It localises to the membrane. The catalysed reaction is O-phospho-L-tyrosyl-[protein] + H2O = L-tyrosyl-[protein] + phosphate. Possesses tyrosine phosphatase activity. Plays a role in regulating the glomerular pressure/filtration rate relationship through an effect on podocyte structure and function. The chain is Receptor-type tyrosine-protein phosphatase O (Ptpro) from Mus musculus (Mouse).